A 531-amino-acid polypeptide reads, in one-letter code: 2,3-bisphosphoglycerate-independent phosphoglycerate mutase (531 aa).

2 residues coordinate Mn(2+): Asp-13 and Ser-63. Catalysis depends on Ser-63, which acts as the Phosphoserine intermediate. Substrate is bound by residues His-124, 154–155, Arg-187, Arg-193, 261–264, and Lys-342; these read RD and RPDR. Mn(2+)-binding residues include Asp-420, His-424, Asp-462, His-463, and His-480.

This sequence belongs to the BPG-independent phosphoglycerate mutase family. Monomer. Mn(2+) serves as cofactor.

The enzyme catalyses (2R)-2-phosphoglycerate = (2R)-3-phosphoglycerate. It participates in carbohydrate degradation; glycolysis; pyruvate from D-glyceraldehyde 3-phosphate: step 3/5. Catalyzes the interconversion of 2-phosphoglycerate and 3-phosphoglycerate. This Mycoplasma mycoides subsp. mycoides SC (strain CCUG 32753 / NCTC 10114 / PG1) protein is 2,3-bisphosphoglycerate-independent phosphoglycerate mutase.